A 267-amino-acid polypeptide reads, in one-letter code: Tryptophan synthase alpha chain (267 aa).

Catalysis depends on proton acceptor residues Glu47 and Asp58.

The protein belongs to the TrpA family. As to quaternary structure, tetramer of two alpha and two beta chains.

The enzyme catalyses (1S,2R)-1-C-(indol-3-yl)glycerol 3-phosphate + L-serine = D-glyceraldehyde 3-phosphate + L-tryptophan + H2O. Its pathway is amino-acid biosynthesis; L-tryptophan biosynthesis; L-tryptophan from chorismate: step 5/5. The alpha subunit is responsible for the aldol cleavage of indoleglycerol phosphate to indole and glyceraldehyde 3-phosphate. This Chlorobaculum parvum (strain DSM 263 / NCIMB 8327) (Chlorobium vibrioforme subsp. thiosulfatophilum) protein is Tryptophan synthase alpha chain.